The primary structure comprises 513 residues: ATP synthase subunit alpha (513 aa).

Residue 169-176 (GDRQTGKT) participates in ATP binding.

It belongs to the ATPase alpha/beta chains family. As to quaternary structure, F-type ATPases have 2 components, CF(1) - the catalytic core - and CF(0) - the membrane proton channel. CF(1) has five subunits: alpha(3), beta(3), gamma(1), delta(1), epsilon(1). CF(0) has three main subunits: a(1), b(2) and c(9-12). The alpha and beta chains form an alternating ring which encloses part of the gamma chain. CF(1) is attached to CF(0) by a central stalk formed by the gamma and epsilon chains, while a peripheral stalk is formed by the delta and b chains.

It localises to the cell inner membrane. The catalysed reaction is ATP + H2O + 4 H(+)(in) = ADP + phosphate + 5 H(+)(out). Functionally, produces ATP from ADP in the presence of a proton gradient across the membrane. The alpha chain is a regulatory subunit. This chain is ATP synthase subunit alpha, found in Haemophilus influenzae (strain ATCC 51907 / DSM 11121 / KW20 / Rd).